A 206-amino-acid chain; its full sequence is Small ribosomal subunit protein uS4 (206 aa).

The region spanning 96–156 (RRLDNVVYRM…EKSKNQLRIK (61 aa)) is the S4 RNA-binding domain.

This sequence belongs to the universal ribosomal protein uS4 family. As to quaternary structure, part of the 30S ribosomal subunit. Contacts protein S5. The interaction surface between S4 and S5 is involved in control of translational fidelity.

Functionally, one of the primary rRNA binding proteins, it binds directly to 16S rRNA where it nucleates assembly of the body of the 30S subunit. With S5 and S12 plays an important role in translational accuracy. The protein is Small ribosomal subunit protein uS4 of Hahella chejuensis (strain KCTC 2396).